The following is a 434-amino-acid chain: Anaerobic glycerol-3-phosphate dehydrogenase subunit B (434 aa).

It belongs to the anaerobic G-3-P dehydrogenase subunit B family. In terms of assembly, composed of a catalytic GlpA/B dimer and of membrane bound GlpC. The cofactor is FMN.

The enzyme catalyses a quinone + sn-glycerol 3-phosphate = dihydroxyacetone phosphate + a quinol. The protein operates within polyol metabolism; glycerol degradation via glycerol kinase pathway; glycerone phosphate from sn-glycerol 3-phosphate (anaerobic route): step 1/1. Functionally, conversion of glycerol 3-phosphate to dihydroxyacetone. Uses fumarate or nitrate as electron acceptor. In Histophilus somni (strain 2336) (Haemophilus somnus), this protein is Anaerobic glycerol-3-phosphate dehydrogenase subunit B.